Here is a 174-residue protein sequence, read N- to C-terminus: Co-chaperone protein HscB homolog (174 aa).

The J domain occupies N2–L74.

Belongs to the HscB family. In terms of assembly, interacts with HscA and stimulates its ATPase activity.

In terms of biological role, co-chaperone involved in the maturation of iron-sulfur cluster-containing proteins. Seems to help targeting proteins to be folded toward HscA. This chain is Co-chaperone protein HscB homolog, found in Shewanella woodyi (strain ATCC 51908 / MS32).